The chain runs to 494 residues: DUF21 domain-containing protein At4g14240 (494 aa).

The Extracellular segment spans residues 1–43 (MHLINAVAAARILSGIGQSNGNNGGEAIPFGSFEWITYAGISC). Residues 31–213 (GSFEWITYAG…GKGGELTHDE (183 aa)) enclose the CNNM transmembrane domain. The helical transmembrane segment at 44–64 (FLVLFAGIMSGLTLGLMSLGL) threads the bilayer. Over 65-93 (VELEILQRSGTPNEKKQAAAIFPVVQKQH) the chain is Cytoplasmic. The chain crosses the membrane as a helical span at residues 94 to 114 (QLLVTLLLCNAMAMEGLPIYL). At 115–121 (DKLFNEY) the chain is on the extracellular side. A helical transmembrane segment spans residues 122 to 142 (VAIILSVTFVLAFGEVIPQAI). Residues 143–159 (CTRYGLAVGANFVWLVR) are Cytoplasmic-facing. The chain crosses the membrane as a helical span at residues 160–180 (ILMTLCYPIAFPIGKILDLVL). Over 181–494 (GHNDALFRRA…TITEPIRRNN (314 aa)) the chain is Extracellular. 3 CBS domains span residues 232–292 (MTPI…TETL), 297–352 (CIRR…SNDS), and 364–425 (GNHD…IVDE). N-linked (GlcNAc...) asparagine glycans are attached at residues N350 and N385. Residues 459-494 (QKGTGGQNKQGQTNKVPGQEQDKMLGTITEPIRRNN) form a disordered region.

It localises to the membrane. This chain is DUF21 domain-containing protein At4g14240 (CBSDUF1), found in Arabidopsis thaliana (Mouse-ear cress).